The primary structure comprises 475 residues: Ribulose bisphosphate carboxylase large chain (475 aa).

Positions 1–2 (MS) are excised as a propeptide. The residue at position 3 (P3) is an N-acetylproline. An N6,N6,N6-trimethyllysine modification is found at K14. Positions 123 and 173 each coordinate substrate. The Proton acceptor role is filled by K175. Position 177 (K177) interacts with substrate. Mg(2+)-binding residues include K201, D203, and E204. The residue at position 201 (K201) is an N6-carboxylysine. Residue H294 is the Proton acceptor of the active site. Substrate-binding residues include R295, H327, and S379.

This sequence belongs to the RuBisCO large chain family. Type I subfamily. Heterohexadecamer of 8 large chains and 8 small chains; disulfide-linked. The disulfide link is formed within the large subunit homodimers. Mg(2+) is required as a cofactor. Post-translationally, the disulfide bond which can form in the large chain dimeric partners within the hexadecamer appears to be associated with oxidative stress and protein turnover.

The protein localises to the plastid. It localises to the chloroplast. The enzyme catalyses 2 (2R)-3-phosphoglycerate + 2 H(+) = D-ribulose 1,5-bisphosphate + CO2 + H2O. It carries out the reaction D-ribulose 1,5-bisphosphate + O2 = 2-phosphoglycolate + (2R)-3-phosphoglycerate + 2 H(+). RuBisCO catalyzes two reactions: the carboxylation of D-ribulose 1,5-bisphosphate, the primary event in carbon dioxide fixation, as well as the oxidative fragmentation of the pentose substrate in the photorespiration process. Both reactions occur simultaneously and in competition at the same active site. This Cerastium glomeratum (Sticky chickweed) protein is Ribulose bisphosphate carboxylase large chain.